Here is a 452-residue protein sequence, read N- to C-terminus: MAYRSCVVGFSSLSGCEMTPAGSPQPGTSGWGSCGLPGPGFSSRSLTSCRPAGTIPKVTVNPSLLVPLDLKVDPAVQQQKNQEKEEMKALNDKFASLIGKVQALEQRNQLLETRWSFLQGQGSATFDLSHHYETFQGRLQEELRKVSQERGQLEANLLQVLEKVEEFRVRYEDEISKRTDLEFTFVQLKKDLDAECLRRTELETKLKGLQGFLELMRTVYEQELKDLTAQVKDVSVTVGLDSRCHIDLSGIVEEVKAQYDAIAARSLEEAEAYSRSQLEERAARSAEFGNSLQSSRCEIADLNVRIQKLRSQIVSVKSHCLKLEENIKVAEEQGELAFQDAKDKMAQLENALQKAKQDMARQLREYQDLMNTKLALDIEIATYHKLMEGEESRMDLPSATVVSTVKSGCRTTASKSGLTKTSSRKKKNRRGPVIKITEMSEKYLSQESEASE.

The tract at residues 1–82 (MAYRSCVVGF…DPAVQQQKNQ (82 aa)) is head. Serine 45 bears the Phosphoserine mark. Residues 82 to 118 (QEKEEMKALNDKFASLIGKVQALEQRNQLLETRWSFL) are coil 1A. The 312-residue stretch at 83-394 (EKEEMKALND…KLMEGEESRM (312 aa)) folds into the IF rod domain. The segment at 119–135 (QGQGSATFDLSHHYETF) is linker 1. Residues 136-227 (QGRLQEELRK…TVYEQELKDL (92 aa)) form a coil 1B region. The tract at residues 228-251 (TAQVKDVSVTVGLDSRCHIDLSGI) is linker 12. The interval 252-390 (VEEVKAQYDA…ATYHKLMEGE (139 aa)) is coil 2. A tail region spans residues 391 to 452 (ESRMDLPSAT…YLSQESEASE (62 aa)). Positions 412 to 452 (TASKSGLTKTSSRKKKNRRGPVIKITEMSEKYLSQESEASE) are disordered. The span at 422-432 (SSRKKKNRRGP) shows a compositional bias: basic residues. Polar residues predominate over residues 443–452 (YLSQESEASE).

The protein belongs to the intermediate filament family. In terms of assembly, heterotetramer of two type I and two type II keratins.

This is Keratin, type II cytoskeletal 80 (Krt80) from Mus musculus (Mouse).